A 331-amino-acid polypeptide reads, in one-letter code: Trans-O-hydroxybenzylidenepyruvate hydratase-aldolase (331 aa).

It belongs to the DapA family.

The enzyme catalyses (3E)-4-(2-hydroxyphenyl)-2-oxobut-3-enoate + H2O = salicylaldehyde + pyruvate. The protein operates within aromatic compound metabolism; naphthalene degradation. Involved in the naphthalene upper catabolic pathway. Catalyzes the transformation of trans-O-hydroxybenzylidenepyruvate (THBPA) to salicylaldehyde and pyruvate. The reaction is reversible. Can also use substrate which carry trans-alpha,beta-unsaturated keto acid side chain and adjacent hydroxyl group such as trans-4-(3-hydroxy-2-thianaphthenyl)-2-oxo-but-3-enoate, trans-4-(3-hydroxy-2-benzofuranyl)-2-oxobut-3-enoate, and trans-4-(3-hydroxy-2-thienyl)-2-oxobut-3-enoate. In Pseudomonas putida (Arthrobacter siderocapsulatus), this protein is Trans-O-hydroxybenzylidenepyruvate hydratase-aldolase (nahE).